We begin with the raw amino-acid sequence, 847 residues long: Aryl hydrocarbon receptor (847 aa).

Residues 1–39 (MNGGGANITYASRKRRKPVQKTVKPIPAEGIKSNPSKRH) are disordered. 2 consecutive short sequence motifs (nuclear localization signal) follow at residues 13–16 (RKRR) and 37–42 (KRHRDR). One can recognise a bHLH domain in the interval 27-80 (PAEGIKSNPSKRHRDRLNTELDRLASLLPFPQDVINKLDKLSVLRLSVSYLRAK). The DNA-binding stretch occupies residues 38–66 (RHRDRLNTELDRLASLLPFPQDVINKLDK). 3 required for maintaining the overall integrity of the AHR:ARNT heterodimer and its transcriptional activity regions span residues 50–82 (LASL…AKSF), 117–125 (LLQALNGFV), and 264–266 (FAI). The Nuclear export signal motif lies at 64–72 (LDKLSVLRL). In terms of domain architecture, PAS 1 spans 120 to 173 (ALNGFVLVVTVDALVFYASSTIQDYLGFQQSDVIHQSVYELIHTEDRAEFQRQL). The region spanning 281 to 336 (KNFIFRTKHKLDFTPTGCDAKGQIVLGYTEAELCMRGSGYQFIHAADMLYCAESHI) is the PAS 2 domain. The region spanning 346–384 (LAVFRLLTKDNRWAWVQSNARFIYKNGRPDFIIATQRPL) is the PAC domain. Disordered regions lie at residues 430 to 452 (KSGT…VHPS) and 825 to 847 (HLPP…GRLL). Residues 440-452 (TKPTPSKDSVHPS) show a composition bias toward polar residues.

As to quaternary structure, homodimer. Heterodimer; efficient DNA binding requires dimerization with another bHLH protein. Binds MYBBP1A. Interacts with coactivators including SRC-1, RIP140 and NOCA7, and with the corepressor SMRT. Interacts with NEDD8 and IVNS1ABP. Interacts with BMAL1. Interacts with HSP90AB1. Interacts with ARNT; the heterodimer ARNT:AHR binds to core DNA sequence 5'-TGCGTG-3' within the dioxin response element (DRE) of target gene promoters and activates their transcription. Interacts with TIPARP; leading to mono-ADP-ribosylation of AHR and subsequent inhibition of AHR. Post-translationally, mono-ADP-ribosylated, leading to inhibit transcription activator activity of AHR.

Its subcellular location is the cytoplasm. The protein localises to the nucleus. In terms of biological role, ligand-activated transcription factor that enables cells to adapt to changing conditions by sensing compounds from the environment, diet, microbiome and cellular metabolism, and which plays important roles in development, immunity and cancer. Upon ligand binding, translocates into the nucleus, where it heterodimerizes with ARNT and induces transcription by binding to xenobiotic response elements (XRE). Regulates a variety of biological processes, including angiogenesis, hematopoiesis, drug and lipid metabolism, cell motility and immune modulation. Xenobiotics can act as ligands: upon xenobiotic-binding, activates the expression of multiple phase I and II xenobiotic chemical metabolizing enzyme genes (such as the CYP1A1 gene). Mediates biochemical and toxic effects of halogenated aromatic hydrocarbons. Next to xenobiotics, natural ligands derived from plants, microbiota, and endogenous metabolism are potent AHR agonists. Tryptophan (Trp) derivatives constitute an important class of endogenous AHR ligands. Acts as a negative regulator of anti-tumor immunity: indoles and kynurenic acid generated by Trp catabolism act as ligand and activate AHR, thereby promoting AHR-driven cancer cell motility and suppressing adaptive immunity. Regulates the circadian clock by inhibiting the basal and circadian expression of the core circadian component PER1. Inhibits PER1 by repressing the CLOCK-BMAL1 heterodimer mediated transcriptional activation of PER1. The heterodimer ARNT:AHR binds to core DNA sequence 5'-TGCGTG-3' within the dioxin response element (DRE) of target gene promoters and activates their transcription. The protein is Aryl hydrocarbon receptor (AHR) of Oryctolagus cuniculus (Rabbit).